Consider the following 274-residue polypeptide: tRNA-cytidine(32) 2-sulfurtransferase (274 aa).

Positions 40 to 45 (SGGKDS) match the PP-loop motif motif. The [4Fe-4S] cluster site is built by Cys-115, Cys-118, and Cys-206.

Belongs to the TtcA family. In terms of assembly, homodimer. The cofactor is Mg(2+). Requires [4Fe-4S] cluster as cofactor.

The protein resides in the cytoplasm. The enzyme catalyses cytidine(32) in tRNA + S-sulfanyl-L-cysteinyl-[cysteine desulfurase] + AH2 + ATP = 2-thiocytidine(32) in tRNA + L-cysteinyl-[cysteine desulfurase] + A + AMP + diphosphate + H(+). It participates in tRNA modification. Its function is as follows. Catalyzes the ATP-dependent 2-thiolation of cytidine in position 32 of tRNA, to form 2-thiocytidine (s(2)C32). The sulfur atoms are provided by the cysteine/cysteine desulfurase (IscS) system. In Stutzerimonas stutzeri (strain A1501) (Pseudomonas stutzeri), this protein is tRNA-cytidine(32) 2-sulfurtransferase.